Here is a 57-residue protein sequence, read N- to C-terminus: Large ribosomal subunit protein bL32 (57 aa).

The segment covering 1–16 has biased composition (basic residues); that stretch reads MAVQKSRKTPSRRGMR. The tract at residues 1 to 37 is disordered; it reads MAVQKSRKTPSRRGMRRSHDALSTTAITVDETTGELH. The segment covering 21-31 has biased composition (polar residues); it reads ALSTTAITVDE.

The protein belongs to the bacterial ribosomal protein bL32 family.

The chain is Large ribosomal subunit protein bL32 from Hydrogenovibrio crunogenus (strain DSM 25203 / XCL-2) (Thiomicrospira crunogena).